Here is a 290-residue protein sequence, read N- to C-terminus: Ribosomal RNA small subunit methyltransferase A (290 aa).

S-adenosyl-L-methionine-binding residues include Asn27, Leu29, Gly54, Glu75, Asp100, and Asn125.

It belongs to the class I-like SAM-binding methyltransferase superfamily. rRNA adenine N(6)-methyltransferase family. RsmA subfamily.

It is found in the cytoplasm. The catalysed reaction is adenosine(1518)/adenosine(1519) in 16S rRNA + 4 S-adenosyl-L-methionine = N(6)-dimethyladenosine(1518)/N(6)-dimethyladenosine(1519) in 16S rRNA + 4 S-adenosyl-L-homocysteine + 4 H(+). In terms of biological role, specifically dimethylates two adjacent adenosines (A1518 and A1519) in the loop of a conserved hairpin near the 3'-end of 16S rRNA in the 30S particle. May play a critical role in biogenesis of 30S subunits. This chain is Ribosomal RNA small subunit methyltransferase A, found in Streptococcus gordonii (strain Challis / ATCC 35105 / BCRC 15272 / CH1 / DL1 / V288).